The primary structure comprises 433 residues: Trigger factor (433 aa).

Positions 161–246 (EDRVVIDFVG…LKKVENIVLP (86 aa)) constitute a PPIase FKBP-type domain.

Belongs to the FKBP-type PPIase family. Tig subfamily.

It is found in the cytoplasm. The catalysed reaction is [protein]-peptidylproline (omega=180) = [protein]-peptidylproline (omega=0). Its function is as follows. Involved in protein export. Acts as a chaperone by maintaining the newly synthesized protein in an open conformation. Functions as a peptidyl-prolyl cis-trans isomerase. The chain is Trigger factor from Actinobacillus pleuropneumoniae serotype 7 (strain AP76).